The primary structure comprises 143 residues: Nucleoside diphosphate kinase (143 aa).

ATP contacts are provided by Lys-11, Phe-59, Arg-87, Thr-93, Arg-104, and Asn-114. The Pros-phosphohistidine intermediate role is filled by His-117.

It belongs to the NDK family. Homotetramer. Mg(2+) serves as cofactor.

It localises to the cytoplasm. It catalyses the reaction a 2'-deoxyribonucleoside 5'-diphosphate + ATP = a 2'-deoxyribonucleoside 5'-triphosphate + ADP. The catalysed reaction is a ribonucleoside 5'-diphosphate + ATP = a ribonucleoside 5'-triphosphate + ADP. Major role in the synthesis of nucleoside triphosphates other than ATP. The ATP gamma phosphate is transferred to the NDP beta phosphate via a ping-pong mechanism, using a phosphorylated active-site intermediate. This Salmonella agona (strain SL483) protein is Nucleoside diphosphate kinase.